A 935-amino-acid polypeptide reads, in one-letter code: Intimin (935 aa).

The N-terminal stretch at 1 to 41 (MITHGFYARTRHKHKLKKTFIMLSAGLGLFFYVNQNSFANG) is a signal peptide. Residues 40 to 153 (NGENYFKLSS…KMTKMSPDAT (114 aa)) form a peptidoglycan-binding region. The segment at 40 to 153 (NGENYFKLSS…KMTKMSPDAT (114 aa)) is sufficient for homodimerization. Residues 40-212 (NGENYFKLSS…LQAWLQHYGT (173 aa)) are required for periplasmic localization. Residues 63–112 (LFYTLKTGETVSSISKSQGISLSVIWSLNKHLYSSESEMLKAAPGQQIIL) enclose the LysM domain. The interval 210–411 (YGTAEVNLQS…LYSMQFRYQF (202 aa)) is inverse autotransporter. Residues 402–411 (LYSMQFRYQF) are signature sequence for beta-barrel assembly machinery (BAM), which recognizes the unfolded beta-barrel in the periplasm. 2 consecutive Big-1 domains span residues 560-653 (VTDF…VIFV) and 660-754 (ITEI…VTFF). In terms of domain architecture, BIG2 spans 790 to 834 (GGNGTYSWHSENTNIATVDESGKVTLKGKGTAVINVTSGDKQTVS). Residues C859 and C933 are joined by a disulfide bond.

It belongs to the intimin/invasin family. In terms of assembly, homodimer. Interacts with Tir.

The protein resides in the cell outer membrane. Functionally, an inverse autotransporter. Adhesin, which mediates attachment to the human intestine epithelial cells. Necessary for the production of attaching and effacing lesions on infected human tissue culture cells. Anchored to the outer membrane by binding to peptidoglycan (PGN) via its periplasmic domain, thus helping in receptor interactions during host invasion. PGN-binding may also aid in resisting mechanical and chemical stress during transit of the bacterium through the gastrointestinal tract of the host. This is Intimin (eae) from Escherichia coli O111:H-.